Here is a 986-residue protein sequence, read N- to C-terminus: P3N-PIPO polyprotein (986 aa).

Positions 141–284 (KLTEGQMNHL…QGVMDSMVQF (144 aa)) constitute a Peptidase S30 domain. Residues H192, D201, and S235 each act as for P1 proteinase activity in the active site. An Involved in interaction with stylet and aphid transmission motif is present at residues 334–337 (KITC). The short motif at 592–594 (PTK) is the Involved in virions binding and aphid transmission element. The region spanning 618-740 (LYIARQGFCY…ESDIKHYRVG (123 aa)) is the Peptidase C6 domain. Residues C626 and H699 each act as for helper component proteinase activity in the active site.

It belongs to the potyviridae P3N-PIPO polyprotein family. As to quaternary structure, interacts (via PIPO domain) with host PCaP1 protein; this interaction may help to anchor the movement complex to the plasma membrane from which the complex could move to the plasmodesmata. Potyviral RNA is expressed as two polyproteins which undergo post-translational proteolytic processing. Genome polyprotein is processed by NIa-pro, P1 and HC-pro proteinases resulting in the production of at least ten individual proteins. P3N-PIPO is cleaved by P1 and HC-pro proteinases resulting in the production of three individual proteins. The P1 proteinase and the HC-pro cleave only their respective C-termini autocatalytically.

The protein resides in the host cell junction. It localises to the host plasmodesma. The enzyme catalyses Hydrolyzes a Gly-|-Gly bond at its own C-terminus, commonly in the sequence -Tyr-Xaa-Val-Gly-|-Gly, in the processing of the potyviral polyprotein.. Required for aphid transmission and also has proteolytic activity. Only cleaves a Gly-Gly dipeptide at its own C-terminus. Interacts with virions and aphid stylets. Acts as a suppressor of RNA-mediated gene silencing, also known as post-transcriptional gene silencing (PTGS), a mechanism of plant viral defense that limits the accumulation of viral RNAs. May have RNA-binding activity. Functionally, allows efficient cell to cell propagation, by bypassing the host cell wall barrier. Transports viral genome to neighboring plant cells directly through plasmosdesmata, without any budding. In Capsicum (peppers), this protein is P3N-PIPO polyprotein.